The primary structure comprises 211 residues: 3-demethoxyubiquinol 3-hydroxylase (211 aa).

6 residues coordinate Fe cation: glutamate 60, glutamate 90, histidine 93, glutamate 142, glutamate 174, and histidine 177.

The protein belongs to the COQ7 family. Fe cation serves as cofactor.

It is found in the cell membrane. It carries out the reaction a 5-methoxy-2-methyl-3-(all-trans-polyprenyl)benzene-1,4-diol + AH2 + O2 = a 3-demethylubiquinol + A + H2O. Its pathway is cofactor biosynthesis; ubiquinone biosynthesis. Catalyzes the hydroxylation of 2-nonaprenyl-3-methyl-6-methoxy-1,4-benzoquinol during ubiquinone biosynthesis. The chain is 3-demethoxyubiquinol 3-hydroxylase from Acinetobacter baumannii (strain AB307-0294).